The chain runs to 202 residues: Small ribosomal subunit protein uS4c (202 aa).

Residues 90-152 form the S4 RNA-binding domain; it reads MRLDNLIFRL…AASKSLVNTY (63 aa).

The protein belongs to the universal ribosomal protein uS4 family. As to quaternary structure, part of the 30S ribosomal subunit. Contacts protein S5. The interaction surface between S4 and S5 is involved in control of translational fidelity.

The protein localises to the plastid. It localises to the chloroplast. One of the primary rRNA binding proteins, it binds directly to 16S rRNA where it nucleates assembly of the body of the 30S subunit. In terms of biological role, with S5 and S12 plays an important role in translational accuracy. The protein is Small ribosomal subunit protein uS4c (rps4) of Emiliania huxleyi (Coccolithophore).